Reading from the N-terminus, the 242-residue chain is MLPFWIALQFLSSLPIRLPGMPQPQELGRSLLFYPVVGVLFGVLLWALSTALMGAPLLLHAALLLTAWVLLSGGLHLDGLADSADAWLGGFGDRERTLAIMKDPRSGPIAVVTLGLVLLLKFTALVALIEQQNGAALILAPLIGRASMLALFLTTRYVRAGGLGQALSDHLPRIVGQQVLILSGLACILIGGFSGGVAVLLAAICFIGLRQLMVNRLGGTTGDTAGALLELLEVAVLVGLAL.

5 helical membrane-spanning segments follow: residues 31 to 51 (LLFY…LSTA), 52 to 72 (LMGA…VLLS), 109 to 129 (IAVV…VALI), 134 to 154 (GAAL…LFLT), and 188 to 208 (ILIG…CFIG).

This sequence belongs to the CobS family. Requires Mg(2+) as cofactor.

The protein resides in the cell inner membrane. It catalyses the reaction alpha-ribazole + adenosylcob(III)inamide-GDP = adenosylcob(III)alamin + GMP + H(+). The enzyme catalyses alpha-ribazole 5'-phosphate + adenosylcob(III)inamide-GDP = adenosylcob(III)alamin 5'-phosphate + GMP + H(+). It functions in the pathway cofactor biosynthesis; adenosylcobalamin biosynthesis; adenosylcobalamin from cob(II)yrinate a,c-diamide: step 7/7. In terms of biological role, joins adenosylcobinamide-GDP and alpha-ribazole to generate adenosylcobalamin (Ado-cobalamin). Also synthesizes adenosylcobalamin 5'-phosphate from adenosylcobinamide-GDP and alpha-ribazole 5'-phosphate. This chain is Adenosylcobinamide-GDP ribazoletransferase, found in Pseudomonas fluorescens (strain SBW25).